The sequence spans 3462 residues: DNA-directed RNA polymerase subunit beta'' (3462 aa).

4 residues coordinate Zn(2+): Cys263, Cys335, Cys342, and Cys345. The interval 541-1085 is insert-1; it reads KIDDQELSSV…PNKIFSSNLF (545 aa). The insert-2 stretch occupies residues 1528 to 1585; sequence PQSANERKQILKKARQKLRLFPLNLNEKKNRFSSVTLDLLRDQTTLHKMQSCGEAESG. The tract at residues 1602-1699 is insert-3; that stretch reads KKITEIFTFC…FSKQMGNRLL (98 aa). An insert-4 region spans residues 1938–2168; it reads LKNKMNQSFS…SQASWILETN (231 aa). Residues 2320–2870 are insert-5; sequence NLVSGKLNFL…KKKIAKEGAF (551 aa). An insert-6 region spans residues 2972–3196; that stretch reads SKSQRGWFHN…IGQLLRYGKE (225 aa).

Belongs to the RNA polymerase beta' chain family. RpoC2 subfamily. In plastids the minimal PEP RNA polymerase catalytic core is composed of four subunits: alpha, beta, beta', and beta''. When a (nuclear-encoded) sigma factor is associated with the core the holoenzyme is formed, which can initiate transcription. Zn(2+) serves as cofactor.

The protein resides in the plastid. The protein localises to the chloroplast. It catalyses the reaction RNA(n) + a ribonucleoside 5'-triphosphate = RNA(n+1) + diphosphate. DNA-dependent RNA polymerase catalyzes the transcription of DNA into RNA using the four ribonucleoside triphosphates as substrates. This Tupiella akineta (Green alga) protein is DNA-directed RNA polymerase subunit beta''.